The chain runs to 329 residues: Major outer membrane protein P.IB (329 aa).

Positions 1–19 (MKKSLIALTLAALPVAAMA) are cleaved as a signal peptide.

Belongs to the Gram-negative porin family. Homotrimer.

It is found in the cell outer membrane. Serves as a slightly cation selective porin. This Neisseria meningitidis serogroup A / serotype 4A (strain DSM 15465 / Z2491) protein is Major outer membrane protein P.IB (porB).